Here is a 444-residue protein sequence, read N- to C-terminus: Phosphoglucosamine mutase (444 aa).

Catalysis depends on serine 102, which acts as the Phosphoserine intermediate. The Mg(2+) site is built by serine 102, aspartate 241, aspartate 243, and aspartate 245. Serine 102 is modified (phosphoserine).

The protein belongs to the phosphohexose mutase family. Mg(2+) serves as cofactor. Post-translationally, activated by phosphorylation.

The catalysed reaction is alpha-D-glucosamine 1-phosphate = D-glucosamine 6-phosphate. Functionally, catalyzes the conversion of glucosamine-6-phosphate to glucosamine-1-phosphate. The sequence is that of Phosphoglucosamine mutase from Histophilus somni (strain 129Pt) (Haemophilus somnus).